The following is a 351-amino-acid chain: Protein Wnt-4 (351 aa).

Residues methionine 1–alanine 22 form the signal peptide. N-linked (GlcNAc...) asparagine glycosylation is found at asparagine 21 and asparagine 88. Cystine bridges form between cysteine 78–cysteine 89, cysteine 128–cysteine 136, cysteine 138–cysteine 155, cysteine 206–cysteine 220, cysteine 208–cysteine 215, cysteine 280–cysteine 311, cysteine 296–cysteine 306, cysteine 310–cysteine 350, cysteine 326–cysteine 341, cysteine 328–cysteine 338, and cysteine 333–cysteine 334. A lipid anchor (O-palmitoleoyl serine; by PORCN) is attached at serine 212. Asparagine 297 carries N-linked (GlcNAc...) asparagine glycosylation.

This sequence belongs to the Wnt family. In terms of assembly, interacts with CPZ. Post-translationally, palmitoleoylation is required for efficient binding to frizzled receptors. Depalmitoleoylation leads to Wnt signaling pathway inhibition. Predominantly expressed in the diencephalon neuromere D2.

It is found in the secreted. The protein localises to the extracellular space. Its subcellular location is the extracellular matrix. Ligand for members of the frizzled family of seven transmembrane receptors. Plays an important role in embryonic development. This chain is Protein Wnt-4 (WNT4), found in Gallus gallus (Chicken).